A 440-amino-acid chain; its full sequence is Trigger factor (440 aa).

The PPIase FKBP-type domain occupies 163-248 (GDILTVDFLG…AKALKRRVAP (86 aa)).

It belongs to the FKBP-type PPIase family. Tig subfamily.

The protein localises to the cytoplasm. The catalysed reaction is [protein]-peptidylproline (omega=180) = [protein]-peptidylproline (omega=0). Functionally, involved in protein export. Acts as a chaperone by maintaining the newly synthesized protein in an open conformation. Functions as a peptidyl-prolyl cis-trans isomerase. In Acidiphilium cryptum (strain JF-5), this protein is Trigger factor.